The primary structure comprises 463 residues: MRSLSSIALLSVVGAASAQAGPWAQCGGKSFSGSSECASGWKCQELNEWFSQCVPGAESTTPTVSSTPTPTDAPSVSITASATTGINKSISVSSASKSTPLPSSSSASPSPRPTGSGSFAKADGLQFSIDGETKYFAGTNAYWLPFQMNDADIDSVFDHLEQAGLKILRVWGFNDVNTAPSPGTVYFQLHDKEKSTSTINTGKDGLQRLDYVVAAAEKHGVKLIIPFVNSWDDYGGYNAYVKAYGGSKTEWFTNEKIQSVYQAYIKAVVSRYRDSPAIFAWELGNEPRCSGCSTDVIHGWATKISAYIKSLDPNHMVALGDEGMGLTIGSDQSYPYGTSEGNDFEKNLAIPDIDFGTLHLYTTDWGIKDNAWGNGWVENHAKACKAAGKPCLFEEYGMKGNHCTDELKWQKTSLSSGTAADLIWQYGQQLSTGESPKDAYSIFYGTDEWKCAVMDHMENVNKN.

Residues Met-1–Ala-18 form the signal peptide. Residues Gln-19 to Val-54 form the CBM1 domain. Residues Ala-57 to Ile-78 form a disordered region. Positions Ser-59 to Ser-77 are enriched in low complexity. Residues Ser-75 to Ser-118 form a ser-rich linker region. An N-linked (GlcNAc...) asparagine glycan is attached at Asn-87. Residues Ser-93–Ser-118 are compositionally biased toward low complexity. Residues Ser-93–Lys-121 form a disordered region. The tract at residues Phe-119–Asn-463 is catalytic. The substrate site is built by Trp-171 and Asn-285. Glu-286 functions as the Proton donor in the catalytic mechanism. Tyr-361 lines the substrate pocket. Glu-395 serves as the catalytic Nucleophile. A substrate-binding site is contributed by Trp-424.

This sequence belongs to the glycosyl hydrolase 5 (cellulase A) family.

It is found in the secreted. It catalyses the reaction Random hydrolysis of (1-&gt;4)-beta-D-mannosidic linkages in mannans, galactomannans and glucomannans.. Its function is as follows. Endo-1,4-mannanase, a crucial enzyme for depolymerization of seed galactomannans and wood galactoglucomannans. The polypeptide is Probable mannan endo-1,4-beta-mannosidase F (manF) (Aspergillus flavus (strain ATCC 200026 / FGSC A1120 / IAM 13836 / NRRL 3357 / JCM 12722 / SRRC 167)).